The following is a 115-amino-acid chain: Cytochrome c oxidase assembly protein COX16 homolog, mitochondrial (115 aa).

Over 1-6 (MSRLKF) the chain is Mitochondrial matrix. Residues 7–29 (VRVGLPFFAIVLGSAYGLHFFQQ) form a helical membrane-spanning segment. Residues 30–115 (VRFDFRKIKQ…RKVRELKSNV (86 aa)) lie on the Mitochondrial intermembrane side of the membrane.

This sequence belongs to the COX16 family.

It is found in the mitochondrion inner membrane. Required for the assembly of the mitochondrial respiratory chain complex IV (CIV), also known as cytochrome c oxidase. The sequence is that of Cytochrome c oxidase assembly protein COX16 homolog, mitochondrial from Caenorhabditis elegans.